Consider the following 516-residue polypeptide: NADH-quinone oxidoreductase subunit N (516 aa).

Transmembrane regions (helical) follow at residues Leu-12–Val-32, Val-37–Gly-57, Leu-81–Leu-101, Val-108–Ala-128, Leu-131–Leu-151, Val-163–Leu-183, Val-213–Ala-233, Val-246–Val-266, Ile-274–Ala-294, Leu-303–Ala-323, Val-341–Leu-361, Val-386–Phe-406, Gly-419–Leu-439, and Val-491–Leu-511.

This sequence belongs to the complex I subunit 2 family. As to quaternary structure, NDH-1 is composed of 14 different subunits. Subunits NuoA, H, J, K, L, M, N constitute the membrane sector of the complex.

It is found in the cell membrane. The catalysed reaction is a quinone + NADH + 5 H(+)(in) = a quinol + NAD(+) + 4 H(+)(out). Functionally, NDH-1 shuttles electrons from NADH, via FMN and iron-sulfur (Fe-S) centers, to quinones in the respiratory chain. The immediate electron acceptor for the enzyme in this species is believed to be a menaquinone. Couples the redox reaction to proton translocation (for every two electrons transferred, four hydrogen ions are translocated across the cytoplasmic membrane), and thus conserves the redox energy in a proton gradient. This chain is NADH-quinone oxidoreductase subunit N, found in Salinispora tropica (strain ATCC BAA-916 / DSM 44818 / JCM 13857 / NBRC 105044 / CNB-440).